The primary structure comprises 338 residues: Methionine synthase (338 aa).

4 residues coordinate Zn(2+): His-210, Cys-212, Glu-234, and Cys-294.

Belongs to the archaeal MetE family. Zn(2+) is required as a cofactor.

It functions in the pathway amino-acid biosynthesis; L-methionine biosynthesis via de novo pathway. Catalyzes the transfer of a methyl group to L-homocysteine resulting in methionine formation. The physiological methyl donor is unknown. The polypeptide is Methionine synthase (Pyrococcus horikoshii (strain ATCC 700860 / DSM 12428 / JCM 9974 / NBRC 100139 / OT-3)).